The chain runs to 682 residues: ATP-dependent DNA helicase RecG (682 aa).

Positions 46-139 (ELRDLEEVKH…LKNGPHQEDK (94 aa)) are wedge domain. Residues 271-432 (DMSSPYRMNR…VFGEMDVSVI (162 aa)) form the Helicase ATP-binding domain. 284-291 (GDVGSGKT) contributes to the ATP binding site. The DEAH box motif lies at 385-388 (DEQH). The 161-residue stretch at 451-611 (MLDRILAFVE…GFELSEKDLE (161 aa)) folds into the Helicase C-terminal domain.

Belongs to the helicase family. RecG subfamily. In terms of assembly, monomer. Interacts with SSB (sbbA), via the latter's 6 C-terminal residues. Colocalizes with DNA pol III subunit gamma/tau (dnaX).

The protein localises to the cytoplasm. It localises to the nucleoid. The catalysed reaction is Couples ATP hydrolysis with the unwinding of duplex DNA by translocating in the 3'-5' direction.. It carries out the reaction ATP + H2O = ADP + phosphate + H(+). With respect to regulation, replication fork regression on Holliday junctions (HJ) is inhibited by DisA; DisA inhibits the ATPase activity of RecG. Functionally, critical role in recombination and DNA repair. Helps process Holliday junction intermediates to mature products by catalyzing branch migration. Has a DNA unwinding activity characteristic of a DNA helicase with 3'-5' polarity. Unwinds branched duplex DNA (Y-DNA), Holliday junction (HJ) DNA and partially replicated forks as well as catalyzing fork reversal/regression. Does not seem to unwind R-loops. Inhibits the diadenylate cyclase (DAC) activity of DisA in the presence but not absence of HJ DNA, possibly by relocating DisA from the junction. The chain is ATP-dependent DNA helicase RecG from Bacillus subtilis (strain 168).